A 199-amino-acid chain; its full sequence is ATP-dependent Clp protease proteolytic subunit (199 aa).

Serine 97 (nucleophile) is an active-site residue. The active site involves histidine 122.

The protein belongs to the peptidase S14 family. In terms of assembly, fourteen ClpP subunits assemble into 2 heptameric rings which stack back to back to give a disk-like structure with a central cavity, resembling the structure of eukaryotic proteasomes.

It localises to the cytoplasm. The catalysed reaction is Hydrolysis of proteins to small peptides in the presence of ATP and magnesium. alpha-casein is the usual test substrate. In the absence of ATP, only oligopeptides shorter than five residues are hydrolyzed (such as succinyl-Leu-Tyr-|-NHMec, and Leu-Tyr-Leu-|-Tyr-Trp, in which cleavage of the -Tyr-|-Leu- and -Tyr-|-Trp bonds also occurs).. Cleaves peptides in various proteins in a process that requires ATP hydrolysis. Has a chymotrypsin-like activity. Plays a major role in the degradation of misfolded proteins. The chain is ATP-dependent Clp protease proteolytic subunit from Geobacter sulfurreducens (strain ATCC 51573 / DSM 12127 / PCA).